We begin with the raw amino-acid sequence, 258 residues long: Imidazole glycerol phosphate synthase subunit HisF (258 aa).

Catalysis depends on residues D11 and D130.

Belongs to the HisA/HisF family. Heterodimer of HisH and HisF.

Its subcellular location is the cytoplasm. It carries out the reaction 5-[(5-phospho-1-deoxy-D-ribulos-1-ylimino)methylamino]-1-(5-phospho-beta-D-ribosyl)imidazole-4-carboxamide + L-glutamine = D-erythro-1-(imidazol-4-yl)glycerol 3-phosphate + 5-amino-1-(5-phospho-beta-D-ribosyl)imidazole-4-carboxamide + L-glutamate + H(+). The protein operates within amino-acid biosynthesis; L-histidine biosynthesis; L-histidine from 5-phospho-alpha-D-ribose 1-diphosphate: step 5/9. Functionally, IGPS catalyzes the conversion of PRFAR and glutamine to IGP, AICAR and glutamate. The HisF subunit catalyzes the cyclization activity that produces IGP and AICAR from PRFAR using the ammonia provided by the HisH subunit. In Yersinia pseudotuberculosis serotype IB (strain PB1/+), this protein is Imidazole glycerol phosphate synthase subunit HisF.